A 713-amino-acid chain; its full sequence is Protein tyrosine phosphatase domain-containing protein 1 (713 aa).

Positions 80–251 (YSSWITDHLL…LVPLRSVFSC (172 aa)) constitute a Tyrosine-protein phosphatase domain. The active-site Phosphocysteine intermediate is the Cys188.

Belongs to the protein-tyrosine phosphatase family. Non-receptor class PTPDC1 subfamily.

Its function is as follows. May play roles in cilia formation and/or maintenance. In Danio rerio (Zebrafish), this protein is Protein tyrosine phosphatase domain-containing protein 1 (ptpdc1).